The sequence spans 623 residues: Vacuolar-sorting receptor 1 (623 aa).

The signal sequence occupies residues 1-22 (MKCWRLSAILFLGFMLTSLSTA). Residues 23 to 564 (RFVVEKNSLS…SKTASQAKST (542 aa)) are Lumenal-facing. Residues 54–163 (QYGGSMAGNV…SFGEKLKDAI (110 aa)) form the PA domain. Asn-143 is a glycosylation site (N-linked (GlcNAc...) asparagine). EGF-like domains are found at residues 411–461 (ETNE…TTCE) and 464–511 (GHGR…KNCE). Disulfide bonds link Cys-415-Cys-433, Cys-422-Cys-442, Cys-444-Cys-460, Cys-468-Cys-488, Cys-475-Cys-496, and Cys-498-Cys-510. Positions 512-554 (DIDECKDKKACQCPECSCKNTWGSYNCSCSGDLLYIKDQDTCI) constitute an EGF-like 3; calcium-binding domain. N-linked (GlcNAc...) asparagine glycosylation is present at Asn-537. Cysteines 540 and 553 form a disulfide. A helical membrane pass occupies residues 565–585 (WAAFWVVLIALAMIAGGGFLV). The Cytoplasmic portion of the chain corresponds to 586–623 (YKYRIRQYMDSEIRAIMAQYMPLDSQEEGPNHVNHQRG). Residues 605 to 608 (YMPL) carry the Tyrosine-based internalization motif motif.

Belongs to the VSR (BP-80) family. In terms of assembly, interacts with the N-terminal propeptide of aleurein (proaleurein).

The protein localises to the membrane. It localises to the golgi apparatus membrane. Its subcellular location is the cytoplasmic vesicle. The protein resides in the clathrin-coated vesicle membrane. It is found in the prevacuolar compartment membrane. In terms of biological role, vacuolar-sorting receptor (VSR) involved in clathrin-coated vesicles sorting from Golgi apparatus to vacuoles. Seems to binds preferentially proteins containing a N-terminal NPIR motif. The polypeptide is Vacuolar-sorting receptor 1 (BP80) (Pisum sativum (Garden pea)).